We begin with the raw amino-acid sequence, 376 residues long: CC-adding tRNA nucleotidyltransferase (376 aa).

26 to 29 serves as a coordination point for CTP; sequence GAVR. 2 residues coordinate Mg(2+): Asp39 and Asp41. Residues 94 to 95, Asn99, 136 to 145, and Arg176 each bind CTP; these read RD and DPLRMLRAAR.

This sequence belongs to the tRNA nucleotidyltransferase/poly(A) polymerase family. The cofactor is Mg(2+).

The enzyme catalyses a tRNA precursor + 2 CTP = a tRNA with a 3' CC end + 2 diphosphate. TRNA nucleotidyltransferase involved in the synthesis of the tRNA CCA terminus. Adds the two cytidine residues to tRNA. In Shouchella clausii (strain KSM-K16) (Alkalihalobacillus clausii), this protein is CC-adding tRNA nucleotidyltransferase.